The chain runs to 249 residues: 5'-nucleotidase SurE (249 aa).

Positions 8, 9, 39, and 91 each coordinate a divalent metal cation.

The protein belongs to the SurE nucleotidase family. Requires a divalent metal cation as cofactor.

It is found in the cytoplasm. The enzyme catalyses a ribonucleoside 5'-phosphate + H2O = a ribonucleoside + phosphate. Functionally, nucleotidase that shows phosphatase activity on nucleoside 5'-monophosphates. The sequence is that of 5'-nucleotidase SurE from Haemophilus influenzae (strain ATCC 51907 / DSM 11121 / KW20 / Rd).